Reading from the N-terminus, the 395-residue chain is ATP phosphoribosyltransferase regulatory subunit (395 aa).

This sequence belongs to the class-II aminoacyl-tRNA synthetase family. HisZ subfamily. In terms of assembly, heteromultimer composed of HisG and HisZ subunits.

It localises to the cytoplasm. The protein operates within amino-acid biosynthesis; L-histidine biosynthesis; L-histidine from 5-phospho-alpha-D-ribose 1-diphosphate: step 1/9. Required for the first step of histidine biosynthesis. May allow the feedback regulation of ATP phosphoribosyltransferase activity by histidine. The chain is ATP phosphoribosyltransferase regulatory subunit from Ectopseudomonas mendocina (strain ymp) (Pseudomonas mendocina).